Here is a 255-residue protein sequence, read N- to C-terminus: Urease accessory protein UreD 1 (255 aa).

It belongs to the UreD family. UreD, UreF and UreG form a complex that acts as a GTP-hydrolysis-dependent molecular chaperone, activating the urease apoprotein by helping to assemble the nickel containing metallocenter of UreC. The UreE protein probably delivers the nickel.

The protein localises to the cytoplasm. Functionally, required for maturation of urease via the functional incorporation of the urease nickel metallocenter. In Saccharopolyspora erythraea (strain ATCC 11635 / DSM 40517 / JCM 4748 / NBRC 13426 / NCIMB 8594 / NRRL 2338), this protein is Urease accessory protein UreD 1.